We begin with the raw amino-acid sequence, 267 residues long: Large ribosomal subunit protein uL4 (267 aa).

It belongs to the universal ribosomal protein uL4 family. In terms of assembly, part of the 50S ribosomal subunit.

One of the primary rRNA binding proteins, this protein initially binds near the 5'-end of the 23S rRNA. It is important during the early stages of 50S assembly. It makes multiple contacts with different domains of the 23S rRNA in the assembled 50S subunit and ribosome. Its function is as follows. Forms part of the polypeptide exit tunnel. This chain is Large ribosomal subunit protein uL4, found in Saccharolobus solfataricus (strain ATCC 35092 / DSM 1617 / JCM 11322 / P2) (Sulfolobus solfataricus).